Here is a 260-residue protein sequence, read N- to C-terminus: Indole-3-glycerol phosphate synthase (260 aa).

This sequence belongs to the TrpC family.

It catalyses the reaction 1-(2-carboxyphenylamino)-1-deoxy-D-ribulose 5-phosphate + H(+) = (1S,2R)-1-C-(indol-3-yl)glycerol 3-phosphate + CO2 + H2O. The protein operates within amino-acid biosynthesis; L-tryptophan biosynthesis; L-tryptophan from chorismate: step 4/5. This is Indole-3-glycerol phosphate synthase from Staphylococcus aureus (strain Mu3 / ATCC 700698).